The following is a 144-amino-acid chain: UPF0102 protein Veis_0630 (144 aa).

The disordered stretch occupies residues 11–31 (PPAAAPGPAPAPASAATASER).

Belongs to the UPF0102 family.

The polypeptide is UPF0102 protein Veis_0630 (Verminephrobacter eiseniae (strain EF01-2)).